We begin with the raw amino-acid sequence, 134 residues long: Putative pre-16S rRNA nuclease (134 aa).

The protein belongs to the YqgF nuclease family.

The protein localises to the cytoplasm. In terms of biological role, could be a nuclease involved in processing of the 5'-end of pre-16S rRNA. The chain is Putative pre-16S rRNA nuclease from Helicobacter pylori (strain HPAG1).